A 275-amino-acid chain; its full sequence is Large ribosomal subunit protein uL2 (275 aa).

The tract at residues 224-275 is disordered; sequence AMNPVDHPHGGGEGKAPIGHPGPLTPWGKPALGYKTRKKGKASDKFIVKRRK. Over residues 264 to 275 the composition is skewed to basic and acidic residues; sequence KASDKFIVKRRK.

Belongs to the universal ribosomal protein uL2 family. Part of the 50S ribosomal subunit. Forms a bridge to the 30S subunit in the 70S ribosome.

Functionally, one of the primary rRNA binding proteins. Required for association of the 30S and 50S subunits to form the 70S ribosome, for tRNA binding and peptide bond formation. It has been suggested to have peptidyltransferase activity; this is somewhat controversial. Makes several contacts with the 16S rRNA in the 70S ribosome. This is Large ribosomal subunit protein uL2 from Caldanaerobacter subterraneus subsp. tengcongensis (strain DSM 15242 / JCM 11007 / NBRC 100824 / MB4) (Thermoanaerobacter tengcongensis).